We begin with the raw amino-acid sequence, 437 residues long: MANVVVIGAQWGDEGKGKITDLLSRSADVVVRYQGGVNAGHTIVVDDQVLKLHLIPSGILYPETICLIGSGTVIDPKVMLKELDMLLENSIDISGLQLASTAHVTMPYHRLLDEAMEQQRGDQRIGTTGRGIGPTYADKSQRNGIRVLDLLDSQRLRERLRGPLQEKNRLLEQIYGVAPLDSEQVIEEYLGYGQRLAPHVVDCIQTIHQAARSRKNILFEGAQGTLLDLDHGTYPYVTSSNPISGGACIGAGVGPTLIDRVIGVAKAYTTRVGEGPFPTELEGSINEQLCDRGGEFGTTTGRRRRCGWFDGVIGRYAVAVNGLDCLAITKLDVLDELDEIRVCVAYELNGERIEHFPSSAEDFARCHPIFETLPGWQCSTADCRRLEDLPTTAMDYLRFLADLMEVPIAIVSLGANRDQTIVVEDPIHGPKRALLSA.

Residues G12–K18 and G40–T42 each bind GTP. The active-site Proton acceptor is the D13. Residues D13 and G40 each contribute to the Mg(2+) site. Residues D13–K16, N38–H41, T128, R142, Q223, T238, and R302 contribute to the IMP site. H41 acts as the Proton donor in catalysis. Residue T298–R304 coordinates substrate. GTP-binding positions include R304, K330 to D332, and S412 to G414.

It belongs to the adenylosuccinate synthetase family. In terms of assembly, homodimer. Mg(2+) serves as cofactor.

Its subcellular location is the cytoplasm. The catalysed reaction is IMP + L-aspartate + GTP = N(6)-(1,2-dicarboxyethyl)-AMP + GDP + phosphate + 2 H(+). The protein operates within purine metabolism; AMP biosynthesis via de novo pathway; AMP from IMP: step 1/2. Its function is as follows. Plays an important role in the de novo pathway of purine nucleotide biosynthesis. Catalyzes the first committed step in the biosynthesis of AMP from IMP. In Prochlorococcus marinus (strain MIT 9313), this protein is Adenylosuccinate synthetase.